Reading from the N-terminus, the 511-residue chain is Exodeoxyribonuclease 7 large subunit (511 aa).

The protein belongs to the XseA family. In terms of assembly, heterooligomer composed of large and small subunits.

It is found in the cytoplasm. It catalyses the reaction Exonucleolytic cleavage in either 5'- to 3'- or 3'- to 5'-direction to yield nucleoside 5'-phosphates.. Its function is as follows. Bidirectionally degrades single-stranded DNA into large acid-insoluble oligonucleotides, which are then degraded further into small acid-soluble oligonucleotides. The protein is Exodeoxyribonuclease 7 large subunit of Brucella ovis (strain ATCC 25840 / 63/290 / NCTC 10512).